Reading from the N-terminus, the 499-residue chain is Cytochrome P450 ARB_01131 (499 aa).

A signal peptide spans 1 to 21 (MLSLIVACLVLPLICYKLVRS). N-linked (GlcNAc...) asparagine glycosylation occurs at Asn-23. Cys-437 provides a ligand contact to heme.

The protein belongs to the cytochrome P450 family. Heme is required as a cofactor.

Its function is as follows. Together with an NADPH cytochrome P450 the enzyme system catalyzes the terminal hydroxylation as the first step in the assimilation of alkanes and fatty acids. The polypeptide is Cytochrome P450 ARB_01131 (Arthroderma benhamiae (strain ATCC MYA-4681 / CBS 112371) (Trichophyton mentagrophytes)).